Here is a 984-residue protein sequence, read N- to C-terminus: Ephrin type-B receptor 1 (984 aa).

The signal sequence occupies residues 1-17 (MALDYLLLLLLASAVAA). The Extracellular segment spans residues 18 to 540 (MEETLMDTRT…YKSELREQLP (523 aa)). Positions 19–201 (EETLMDTRTA…FFKKCPSIVQ (183 aa)) constitute an Eph LBD domain. 2 Fibronectin type-III domains span residues 322 to 432 (VPSG…TNQA) and 433 to 528 (APST…TLTD). Asn-334, Asn-426, and Asn-480 each carry an N-linked (GlcNAc...) asparagine glycan. Residues 541-563 (LIAGSAAAGVVFVVSLVAISIVC) traverse the membrane as a helical segment. The Cytoplasmic portion of the chain corresponds to 564–984 (SRKRAYSKEA…QISQSPTAMA (421 aa)). Position 600 is a phosphotyrosine (Tyr-600). The Protein kinase domain maps to 619–882 (VKIEEVIGAG…EIVNTLDKMI (264 aa)). ATP is bound by residues 625-633 (IGAGEFGEV) and Lys-651. Asp-744 serves as the catalytic Proton acceptor. The SAM domain occupies 911–975 (TAFTTVDDWL…LNSIHSMRVQ (65 aa)). The residue at position 928 (Tyr-928) is a Phosphotyrosine; by autocatalysis. The PDZ-binding motif lies at 982–984 (AMA).

This sequence belongs to the protein kinase superfamily. Tyr protein kinase family. Ephrin receptor subfamily. In terms of assembly, heterotetramer upon binding of the ligand. The heterotetramer is composed of an ephrin dimer and a receptor dimer. Oligomerization is probably required to induce biological responses. Interacts with EPHB6; transphosphorylates EPHB6 to form an active signaling complex. Interacts with PICK1. Interacts (through Tyr-594) with NCK1 (via SH2 domain); activates the JUN cascade to regulate cell adhesion. The ligand-activated form interacts (through Tyr-928) with GRB7 and GRB10 (via SH2 domains). The ligand-activated form interacts (residues within the catalytic domain) with GRB2 (via SH2 domain). Interacts with GRB2, SHC1 and SRC; activates the MAPK/ERK cascade to regulate cell migration. Interacts with CBL; regulates receptor degradation through ubiquitination. Interacts with ACP1. Post-translationally, phosphorylated. Autophosphorylation is stimulated by the ligand EFNB1. Required for interaction with SH2 domain-containing interactors, for activation of the MAPK/ERK and JUN signaling cascades and for ubiquitination by CBL. Ubiquitinated; (EFNB1)ligand-induced poly- and/or multi-ubiquitination by CBL is regulated by SRC and leads to lysosomal degradation. As to expression, preferentially expressed in brain.

Its subcellular location is the cell membrane. It localises to the early endosome membrane. It is found in the cell projection. The protein localises to the dendrite. The enzyme catalyses L-tyrosyl-[protein] + ATP = O-phospho-L-tyrosyl-[protein] + ADP + H(+). In terms of biological role, receptor tyrosine kinase which binds promiscuously transmembrane ephrin-B family ligands residing on adjacent cells, leading to contact-dependent bidirectional signaling into neighboring cells. The signaling pathway downstream of the receptor is referred to as forward signaling while the signaling pathway downstream of the ephrin ligand is referred to as reverse signaling. Cognate/functional ephrin ligands for this receptor include EFNB1, EFNB2 and EFNB3. During nervous system development, regulates retinal axon guidance redirecting ipsilaterally ventrotemporal retinal ganglion cells axons at the optic chiasm midline. This probably requires repulsive interaction with EFNB2. In the adult nervous system together with EFNB3, regulates chemotaxis, proliferation and polarity of the hippocampus neural progenitors. In addition to its role in axon guidance also plays an important redundant role with other ephrin-B receptors in development and maturation of dendritic spines and synapse formation. May also regulate angiogenesis. More generally, may play a role in targeted cell migration and adhesion. Upon activation by EFNB1 and probably other ephrin-B ligands activates the MAPK/ERK and the JNK signaling cascades to regulate cell migration and adhesion respectively. Involved in the maintenance of the pool of satellite cells (muscle stem cells) by promoting their self-renewal and reducing their activation and differentiation. In Homo sapiens (Human), this protein is Ephrin type-B receptor 1 (EPHB1).